A 287-amino-acid polypeptide reads, in one-letter code: Probable 3-hydroxybutyryl-CoA dehydrogenase (287 aa).

It belongs to the 3-hydroxyacyl-CoA dehydrogenase family.

The enzyme catalyses (3S)-3-hydroxybutanoyl-CoA + NADP(+) = acetoacetyl-CoA + NADPH + H(+). It functions in the pathway lipid metabolism; butanoate metabolism. The polypeptide is Probable 3-hydroxybutyryl-CoA dehydrogenase (mmgB) (Bacillus subtilis (strain 168)).